The following is a 1170-amino-acid chain: Disease resistance protein LAZ5 (1170 aa).

One can recognise a TIR domain in the interval 10–172 (ESWQVFINFR…KIIDSIKKVL (163 aa)). Glu-84 is a catalytic residue. Residues 193-219 (EAKNVDTFSPNSSDFPSTSIDDDLSIN) are disordered. Residues 198–219 (DTFSPNSSDFPSTSIDDDLSIN) are compositionally biased toward polar residues. In terms of domain architecture, NB-ARC spans 261–513 (RLKEMEEKLD…DVACFFKSEN (253 aa)). 12 LRR repeats span residues 595–616 (MENVRGIFLDMSKVPEEMTFDG), 622–645 (MCNLRYLKIYSSVCHKEGEGIFKF), 646–670 (DTVREIQLPLDKVRYLHWMKYPWEK), 677–700 (PENLVDLELPYSSIKKVWEGVKDT), 723–747 (AKNLERLNLEGCTSLLKLPQEMENM), 761–785 (LTCLQSIKVSSLKILILSDCSKLEE), 790–813 (SENLEELYLDGTAIKGLPPAAGDL), 815–837 (RLVVLNMEGCTELESLPKRLGKQ), 838–861 (KALQELVLSGCSKLESVPTDVKDM), 862–885 (KHLRLLLLDGTRIRKIPKIKSLKC), 888–904 (LSRNIAMVNLQDNLKDF), and 905–930 (SNLKCLVMKNCENLRYLPSLPKCLEY).

The catalysed reaction is NAD(+) + H2O = ADP-D-ribose + nicotinamide + H(+). Functionally, TIR-NB-LRR receptor-like protein that may play a role in plant innate immunity. May trigger hypersensitive programmed cell death in response to pathogen attack. Involved in tolerance to tobacco ringspot virus (TRSV). The sequence is that of Disease resistance protein LAZ5 from Arabidopsis thaliana (Mouse-ear cress).